The sequence spans 288 residues: 4-diphosphocytidyl-2-C-methyl-D-erythritol kinase (288 aa).

The active site involves lysine 13. 96 to 106 (PMGGGIGGGSS) provides a ligand contact to ATP. The active site involves aspartate 138.

The protein belongs to the GHMP kinase family. IspE subfamily.

The enzyme catalyses 4-CDP-2-C-methyl-D-erythritol + ATP = 4-CDP-2-C-methyl-D-erythritol 2-phosphate + ADP + H(+). Its pathway is isoprenoid biosynthesis; isopentenyl diphosphate biosynthesis via DXP pathway; isopentenyl diphosphate from 1-deoxy-D-xylulose 5-phosphate: step 3/6. Functionally, catalyzes the phosphorylation of the position 2 hydroxy group of 4-diphosphocytidyl-2C-methyl-D-erythritol. The chain is 4-diphosphocytidyl-2-C-methyl-D-erythritol kinase from Aliivibrio fischeri (strain ATCC 700601 / ES114) (Vibrio fischeri).